A 524-amino-acid chain; its full sequence is Cytochrome P450 CYP749A22 (524 aa).

Residues 12 to 32 (TPILFQFLLSSLCVFLLFVFI) form a helical membrane-spanning segment. Cys-472 lines the heme pocket.

It belongs to the cytochrome P450 family. Heme is required as a cofactor.

Its subcellular location is the membrane. In terms of biological role, probable heme-thiolate monooxygenase. This chain is Cytochrome P450 CYP749A22, found in Panax ginseng (Korean ginseng).